Reading from the N-terminus, the 377-residue chain is MLSTKFTLRSHKSSVTYIYQDPRTPFNLFTADSSGLIINWDLTIRRPKKSWQAHTDTILTISTIHNHLLTHSRDNTIKIWDESYSCILEIPCNALNFSNICVINDLLITPASINSNNLDVYKIDKDWQITRLIFDFDVYKLVNKGEIIEEIGSSGTSRNDFGIIMQMKIIHTNTTTTTSENNSDYIIYVGFESGDIVGLQLILPRARILSTTGNTNDKTLINQSAKFILQYHNSTHVPNPVICLSNLDSVLVSGSTTNKVIIHSDPIEIMKMDHSGIQAIVNFKNDRLIFGYWNGYIQYGDISINQSLPKLGNTEQEKSKLTKKLTFMTILNESNQETLQSPTGKSKYSVLLKSKRNLVSPLLLAGYEDGSILAYNI.

WD repeat units follow at residues 10–50, 53–91, 230–262, 263–303, and 342–377; these read SHKS…PKKS, AHTD…LEIP, QYHN…KVII, HSDP…GDIS, and PTGK…AYNI.

The protein belongs to the WD repeat ASA1 family. As to quaternary structure, component of the ASTRA chromatin remodeling machinery complex.

The protein localises to the nucleus. Component of the ASTRA complex involved in chromatin remodeling. The protein is ASTRA-associated protein 1 (ASA1) of Candida albicans (strain WO-1) (Yeast).